The chain runs to 96 residues: SAGA complex subunit SUS1 (96 aa).

A Glycyl lysine isopeptide (Lys-Gly) (interchain with G-Cter in ubiquitin) cross-link involves residue Lys-68.

It belongs to the ENY2 family. As to quaternary structure, component of the 1.8 MDa SAGA (Spt-Ada-Gcn5 acetyltransferase) complex, which is composed of 19 subunits TRA1, SPT7, TAF5, NGG1/ADA3, SGF73, SPT20/ADA5, SPT8, TAF12, TAF6, HFI1/ADA1, UBP8, GCN5, ADA2, SPT3, SGF29, TAF10, TAF9, SGF11 and SUS1. The SAGA complex is composed of 4 modules, namely the HAT (histone acetyltransferase) module (GCN5, ADA2, NGG1/ADA3 and SGF29), the DUB (deubiquitinating) module (UBP8, SGF11, SGF73 and SUS1), the core or TAF (TBP-associated factor) module (TAF5, TAF6, TAF9, TAF10 and TAF12), and the Tra1 or SPT (Suppressor of Ty) module (TRA1, HFI1/ADA1, SPT3, SPT7, SPT8 and SPT20/ADA5). The Tra1/SPT module binds activators, the core module recruits TBP (TATA-binding protein), the HAT module contains the histone H3 acetyltransferase GCN5, and the DUB module comprises the histone H2B deubiquitinase UBP8. Also identified in an altered form of SAGA, named SALSA (SAGA altered, Spt8 absent) or SLIK (SAGA-like) complex, which contains a C-terminal truncated form of SPT7 and is missing SPT8. However, it has been shown that the SAGA and SAGA-like SALSA/SLIK transcriptional coactivators are structurally and biochemically equivalent. Component of the nuclear pore complex (NPC)-associated TREX-2 complex (transcription and export complex 2), composed of at least SUS1, SAC3, THP1, SEM1, and CDC31. TREX-2 contains 2 SUS1 chains. The TREX-2 complex interacts with the mRNA export factors MEX67, MTR2 and SUB2, and the nucleoporin NUP1. Interacts directly with THP1, SAC3. Interacts directly with SGF11 and UBP8. Interacts with YRA1, MEX67 and with the RNA polymerase II.

It localises to the nucleus. Its subcellular location is the nucleoplasm. It is found in the cytoplasm. The protein localises to the P-body. In terms of biological role, involved in mRNA export coupled transcription activation by association with both the TREX-2 and the SAGA complexes. SAGA acts as a general cofactor required for essentially all RNA polymerase II transcription. At the promoters, SAGA is required for transcription pre-initiation complex (PIC) recruitment. It influences RNA polymerase II transcriptional activity through different activities such as TBP interaction (via core/TAF module) and promoter selectivity, interaction with transcription activators (via Tra1/SPT module), and chromatin modification through histone acetylation (via HAT module) and deubiquitination (via DUB module). SAGA preferentially acetylates histones H3 (to form H3K9ac, H3K14ac, H3K18ac and H3K23ac) and H2B and deubiquitinates histone H2B. SAGA interacts with DNA via upstream activating sequences (UASs). Also identified in a modified version of SAGA named SALSA or SLIK. The cleavage of SPT7 and the absence of the SPT8 subunit in SLIK neither drive any major conformational differences in its structure compared with SAGA, nor significantly affect HAT, DUB, or DNA-binding activities. Within the SAGA complex, participates in a subcomplex with SGF11, SGF73 and UBP8 required for deubiquitination of H2B and for the maintenance of steady-state H3 methylation levels. The TREX-2 complex functions in docking export-competent ribonucleoprotein particles (mRNPs) to the nuclear entrance of the nuclear pore complex (nuclear basket), by association with components of the nuclear mRNA export machinery (MEX67-MTR2 and SUB2) in the nucleoplasm and the nucleoporin NUP1 at the nuclear basket. TREX-2 participates in mRNA export and accurate chromatin positioning in the nucleus by tethering genes to the nuclear periphery. SUS1 also has a role in mRNP biogenesis and maintenance of genome integrity through preventing RNA-mediated genome instability. Has a role in response to DNA damage induced by methyl methane sulfonate (MMS) and replication arrest induced by hydroxyurea. May also be involved in cytoplasmic mRNA decay by interaction with components of P-bodies. The sequence is that of SAGA complex subunit SUS1 from Saccharomyces cerevisiae (strain ATCC 204508 / S288c) (Baker's yeast).